Here is a 268-residue protein sequence, read N- to C-terminus: Undecaprenyl-diphosphatase 1 (268 aa).

7 helical membrane-spanning segments follow: residues 5–25 (SIIS…IPVS), 43–63 (GNTF…LVYF), 84–104 (LAVL…HDFI), 107–127 (VLFE…FILL), 184–204 (AAEF…VLDL), 218–238 (LIAV…RSLL), and 247–267 (APFA…LLVI).

This sequence belongs to the UppP family.

It localises to the cell inner membrane. It carries out the reaction di-trans,octa-cis-undecaprenyl diphosphate + H2O = di-trans,octa-cis-undecaprenyl phosphate + phosphate + H(+). Its function is as follows. Catalyzes the dephosphorylation of undecaprenyl diphosphate (UPP). Confers resistance to bacitracin. The polypeptide is Undecaprenyl-diphosphatase 1 (Agrobacterium fabrum (strain C58 / ATCC 33970) (Agrobacterium tumefaciens (strain C58))).